The following is a 233-amino-acid chain: Probable septum site-determining protein MinC (233 aa).

This sequence belongs to the MinC family. As to quaternary structure, interacts with MinD and FtsZ.

Cell division inhibitor that blocks the formation of polar Z ring septums. Rapidly oscillates between the poles of the cell to destabilize FtsZ filaments that have formed before they mature into polar Z rings. Prevents FtsZ polymerization. This is Probable septum site-determining protein MinC from Proteus mirabilis (strain HI4320).